A 709-amino-acid chain; its full sequence is Septu protein PtuA (709 aa).

In terms of biological role, component of antiviral defense system Septu type II, composed of PtuA and PtuB. Expression of Septu type II in B.subtilis (strain BEST7003) confers resistance to phages SBSphiC and SpBeta. May be an ATPase. The protein is Septu protein PtuA of Bacillus mycoides (strain KBAB4) (Bacillus weihenstephanensis).